A 316-amino-acid chain; its full sequence is Bifunctional riboflavin kinase/FMN adenylyltransferase (316 aa).

Belongs to the RibF family.

The enzyme catalyses riboflavin + ATP = FMN + ADP + H(+). The catalysed reaction is FMN + ATP + H(+) = FAD + diphosphate. It functions in the pathway cofactor biosynthesis; FAD biosynthesis; FAD from FMN: step 1/1. Its pathway is cofactor biosynthesis; FMN biosynthesis; FMN from riboflavin (ATP route): step 1/1. Catalyzes the phosphorylation of riboflavin to FMN followed by the adenylation of FMN to FAD. In Bacillus subtilis (strain 168), this protein is Bifunctional riboflavin kinase/FMN adenylyltransferase (ribC).